Here is a 258-residue protein sequence, read N- to C-terminus: Imidazole glycerol phosphate synthase subunit HisF (258 aa).

Catalysis depends on residues D11 and D130.

It belongs to the HisA/HisF family. Heterodimer of HisH and HisF.

It localises to the cytoplasm. The catalysed reaction is 5-[(5-phospho-1-deoxy-D-ribulos-1-ylimino)methylamino]-1-(5-phospho-beta-D-ribosyl)imidazole-4-carboxamide + L-glutamine = D-erythro-1-(imidazol-4-yl)glycerol 3-phosphate + 5-amino-1-(5-phospho-beta-D-ribosyl)imidazole-4-carboxamide + L-glutamate + H(+). Its pathway is amino-acid biosynthesis; L-histidine biosynthesis; L-histidine from 5-phospho-alpha-D-ribose 1-diphosphate: step 5/9. IGPS catalyzes the conversion of PRFAR and glutamine to IGP, AICAR and glutamate. The HisF subunit catalyzes the cyclization activity that produces IGP and AICAR from PRFAR using the ammonia provided by the HisH subunit. The sequence is that of Imidazole glycerol phosphate synthase subunit HisF from Haemophilus influenzae (strain 86-028NP).